The primary structure comprises 61 residues: Photosystem II reaction center X protein (61 aa).

A helical transmembrane segment spans residues 26-46; sequence IGSFIAAALLIVIPATAFLIF.

Belongs to the PsbX family. Type 2 subfamily. PSII consists of a core antenna complex that captures photons, and an electron transfer chain that converts photonic excitation into a charge separation. PSII forms dimeric complexes.

The protein localises to the cellular thylakoid membrane. Involved in the binding and/or turnover of quinones at the Q(B) site of Photosystem II. The sequence is that of Photosystem II reaction center X protein from Prochlorococcus marinus (strain MIT 9312).